The primary structure comprises 1000 residues: Chromosome transmission fidelity protein 18 homolog (1000 aa).

3 disordered regions span residues 53-89 (SAGDPIRSNANSKPTGDSNGEALACIDTSKSKKRDAS), 130-159 (AGNSTALSDDITPPPSPNHSPKKNERDSKF), and 272-301 (EFGENDSEILENDDNAGEEDDEDEPSSHSL). Polar residues predominate over residues 60–70 (SNANSKPTGDS). Over residues 272–295 (EFGENDSEILENDDNAGEEDDEDE) the composition is skewed to acidic residues. Residue 396–403 (GPPGLGKT) participates in ATP binding. A compositionally biased stretch (polar residues) spans 888–898 (ARNAGRDNTTA). The segment at 888-916 (ARNAGRDNTTAAAAVKTADPKGAKSAAKP) is disordered.

This sequence belongs to the activator 1 small subunits family. CTF18 subfamily. In terms of assembly, component of the CTF18-RFC complex, which consists of ctf18, ctf8, dcc1, rfc2, rfc3, rfc4 and rfc5. The CTF18-RFC complex associates with pcna.

It localises to the nucleus. Its function is as follows. Chromosome cohesion factor involved in sister chromatid cohesion and fidelity of chromosome transmission. Component of one of the cell nuclear antigen loader complexes, CTF18-replication factor C (CTF18-RFC), which consists of ctf18, ctf8, dcc1, rfc2, rfc3, rfc4 and rfc5. The CTF18-RFC complex binds to single-stranded and primed DNAs and has weak ATPase activity that is stimulated by the presence of primed DNA, replication protein A (RPA) and by proliferating cell nuclear antigen (pcna). The CTF18-RFC complex catalyzes the ATP-dependent loading of pcna onto primed and gapped DNA. This chain is Chromosome transmission fidelity protein 18 homolog (chtf18), found in Xenopus laevis (African clawed frog).